The following is a 397-amino-acid chain: Succinate--CoA ligase [ADP-forming] subunit beta (397 aa).

Residues 9 to 254 (KALLKGYGAP…ETEEDAKEIE (246 aa)) enclose the ATP-grasp domain. Residues Lys46, 53–55 (GRG), Glu109, Ala112, and Glu117 contribute to the ATP site. Asn209 and Asp223 together coordinate Mg(2+). Residues Asn274 and 331-333 (GIM) each bind substrate.

It belongs to the succinate/malate CoA ligase beta subunit family. As to quaternary structure, heterotetramer of two alpha and two beta subunits. It depends on Mg(2+) as a cofactor.

The catalysed reaction is succinate + ATP + CoA = succinyl-CoA + ADP + phosphate. It catalyses the reaction GTP + succinate + CoA = succinyl-CoA + GDP + phosphate. Its pathway is carbohydrate metabolism; tricarboxylic acid cycle; succinate from succinyl-CoA (ligase route): step 1/1. Its function is as follows. Succinyl-CoA synthetase functions in the citric acid cycle (TCA), coupling the hydrolysis of succinyl-CoA to the synthesis of either ATP or GTP and thus represents the only step of substrate-level phosphorylation in the TCA. The beta subunit provides nucleotide specificity of the enzyme and binds the substrate succinate, while the binding sites for coenzyme A and phosphate are found in the alpha subunit. The sequence is that of Succinate--CoA ligase [ADP-forming] subunit beta from Rhizobium johnstonii (strain DSM 114642 / LMG 32736 / 3841) (Rhizobium leguminosarum bv. viciae).